We begin with the raw amino-acid sequence, 1014 residues long: Klotho (1014 aa).

Positions 1–34 (MLARAPPRRPPRLVLLRLLLLHLLLLALRARCLS) are cleaved as a signal peptide. The Extracellular segment spans residues 35–982 (AEPGQGAQTW…TECGFFQTRK (948 aa)). 2 glycosyl hydrolase-1 regions span residues 59 to 508 (LHDT…DNGF) and 517 to 955 (LEGT…SNGF). Residues N161, N285, N346, N609, N614, and N696 are each glycosylated (N-linked (GlcNAc...) asparagine). A helical transmembrane segment spans residues 983–1003 (SLLVFISFLVFTFIISLALIF). The Cytoplasmic portion of the chain corresponds to 1004-1014 (HYSKKGQRSYK).

Belongs to the glycosyl hydrolase 1 family. Klotho subfamily. In terms of assembly, homodimer. Interacts with FGF23 and FGFR1. N-glycosylated. As to expression, membrane-bound protein is present in distal renal tubules, inner ear, ependymal cells of brain choroid plexus, elongating spermatids and mature oocytes (at protein level). Soluble peptide is present in serum (100 pM) and cerebrospinal fluid. Expressed strongly in kidney, moderately in brain choroid plexus, and at low levels in pituitary, placenta, skeletal muscle, urinary bladder, aorta, pancreas, testis, ovary, colon, thyroid gland and adipocytes.

It is found in the cell membrane. Its subcellular location is the apical cell membrane. It localises to the secreted. It catalyses the reaction a beta-D-glucuronoside + H2O = D-glucuronate + an alcohol. With respect to regulation, inhibited by D-saccharic acid 1,4-lactone and taurocholic acid. May have weak glycosidase activity towards glucuronylated steroids. However, it lacks essential active site Glu residues at positions 241 and 874, suggesting it may be inactive as a glycosidase in vivo. May be involved in the regulation of calcium and phosphorus homeostasis by inhibiting the synthesis of active vitamin D. Essential factor for the specific interaction between FGF23 and FGFR1. Functionally, the Klotho peptide generated by cleavage of the membrane-bound isoform may be an anti-aging circulating hormone which would extend life span by inhibiting insulin/IGF1 signaling. This is Klotho (Kl) from Mus musculus (Mouse).